The following is a 90-amino-acid chain: Small cysteine-rich outer membrane protein OmcA (90 aa).

Residues 1 to 19 form the signal peptide; sequence MKKAVLIAAMFCGVVSLSS. C20 carries N-palmitoyl cysteine lipidation. The S-diacylglycerol cysteine moiety is linked to residue C20. Residues 69 to 90 are disordered; the sequence is TECNSQSPQVKGCTSPDGRCKQ.

Part of a disulfide cross-linked outer membrane complex (COMC) composed of the major outer membrane porin (MOMP), the small cysteine-rich protein (OmcA) and the large cysteine-rich periplasmic protein (OmcB).

It is found in the cell outer membrane. In terms of biological role, in elementary bodies (EBs, the infectious stage, which is able to survive outside the host cell) provides the structural integrity of the outer envelope through disulfide cross-links with the large cysteine-rich periplasmic protein and the major outer membrane porin. It has been described in publications as the Sarkosyl-insoluble COMC (Chlamydia outer membrane complex), and serves as the functional equivalent of peptidoglycan. In Chlamydia pneumoniae (Chlamydophila pneumoniae), this protein is Small cysteine-rich outer membrane protein OmcA (omcA).